The following is an 882-amino-acid chain: Alanine--tRNA ligase (882 aa).

Residues H564, H568, C666, and H670 each contribute to the Zn(2+) site.

The protein belongs to the class-II aminoacyl-tRNA synthetase family. Zn(2+) serves as cofactor.

The protein resides in the cytoplasm. The enzyme catalyses tRNA(Ala) + L-alanine + ATP = L-alanyl-tRNA(Ala) + AMP + diphosphate. Its function is as follows. Catalyzes the attachment of alanine to tRNA(Ala) in a two-step reaction: alanine is first activated by ATP to form Ala-AMP and then transferred to the acceptor end of tRNA(Ala). Also edits incorrectly charged Ser-tRNA(Ala) and Gly-tRNA(Ala) via its editing domain. In Rubrobacter xylanophilus (strain DSM 9941 / JCM 11954 / NBRC 16129 / PRD-1), this protein is Alanine--tRNA ligase.